The sequence spans 395 residues: Multidrug resistance protein MdtL (395 aa).

Over 1–3 (MKR) the chain is Cytoplasmic. A helical membrane pass occupies residues 4–24 (FLLCSFALVLLYPAGIDMYLV). Over 25–41 (GLPRIAADLNASEAQLH) the chain is Periplasmic. The chain crosses the membrane as a helical span at residues 42 to 62 (IAFSVYLAGMATAMLFAGKIA). Residues 63–68 (DQSGRK) lie on the Cytoplasmic side of the membrane. A helical transmembrane segment spans residues 69–89 (PVAIVGALVFMMASLLCSRAS). Residues 90-92 (EGS) are Periplasmic-facing. A helical transmembrane segment spans residues 93 to 113 (LFLSGRFLQGVGAGGCYVVAF). The Cytoplasmic portion of the chain corresponds to 114-130 (AILRDTLDEHRRAKVLS). The chain crosses the membrane as a helical span at residues 131 to 151 (LLNGITCIVPVLAPVVGHLIM). Topologically, residues 152–157 (LRFPWQ) are periplasmic. The chain crosses the membrane as a helical span at residues 158-178 (SLFYTMSAMGIIVGLLSLFIL). Over 179–216 (RETRPVRLAPRDLSRSSPAAESLINRFFVSRLAITTLS) the chain is Cytoplasmic. The helical transmembrane segment at 217–237 (VSVILTFVNASPVLLMEVMGF) threads the bilayer. Topologically, residues 238–246 (SRGDYAITM) are periplasmic. Residues 247–267 (ALTAGVSMVVSFSTPFALGLF) traverse the membrane as a helical segment. Topologically, residues 268-270 (KPR) are cytoplasmic. The helical transmembrane segment at 271-291 (TLMLVSQGLFLTAGVTLSLAH) threads the bilayer. Over 292 to 294 (TNT) the chain is Periplasmic. A helical transmembrane segment spans residues 295–315 (VTLFGLTLICAGFSVGFGVAM). The Cytoplasmic segment spans residues 316 to 327 (SQALGPFSLRAG). The chain crosses the membrane as a helical span at residues 328–350 (VASSTLGIAQVCGSSLWIWLAAI). The Periplasmic portion of the chain corresponds to 351–354 (LGIS). The chain crosses the membrane as a helical span at residues 355 to 377 (AMNMLIGILIGCSIVSILLIFSV). Over 378–395 (TPNRSVAEHEEIPYQSRP) the chain is Cytoplasmic.

It belongs to the major facilitator superfamily. DHA1 family. MdtL (TC 2.A.1.2.22) subfamily.

The protein resides in the cell inner membrane. This is Multidrug resistance protein MdtL (mdtL) from Salmonella typhimurium (strain LT2 / SGSC1412 / ATCC 700720).